We begin with the raw amino-acid sequence, 449 residues long: Polyadenylation factor subunit 2 (449 aa).

7 WD repeats span residues 77 to 116 (KVKHVIPAITWTPEGRRLVVATYSGEFSLWNGSSFNFESI), 119 to 158 (AHDSAVTVMQYSHAGDWLISGDADGTIKIWQPNFNMVKVL), 161 to 200 (AHTECMRDISFSYSDQKFVTCSDDNVLKIWNFSNGQQERV), 203 to 242 (GHHWDVKSCDWHPKMGLIVSGSKDNLIKLWDPRTGRNVST), 245 to 285 (GLKH…RELQ), 288 to 328 (RDDM…SNST), and 337 to 376 (AHEKSVTSLAYSPVGHILASAAKDRTIRFWARSRPVDPNA). Positions 411 to 432 (LPPANETNLGTPQPSILGSESI) are disordered. Over residues 415 to 432 (NETNLGTPQPSILGSESI) the composition is skewed to polar residues.

Its subcellular location is the nucleus. In terms of biological role, required for 3'-end cleavage and polyadenylation of pre-mRNAs. Also involved in chromosome segregation where it has a role in chromosome attachment to the mitotic spindle. In Eremothecium gossypii (strain ATCC 10895 / CBS 109.51 / FGSC 9923 / NRRL Y-1056) (Yeast), this protein is Polyadenylation factor subunit 2 (PSF2).